The following is a 415-amino-acid chain: Ankyrin repeat domain-containing protein 10 (415 aa).

4 ANK repeats span residues Ser20–Leu49, Tyr56–Val85, Tyr90–Lys119, and Glu123–Leu152. The segment covering Thr303–Gly325 has biased composition (polar residues). The interval Thr303 to Glu330 is disordered.

In Mus musculus (Mouse), this protein is Ankyrin repeat domain-containing protein 10 (Ankrd10).